A 193-amino-acid polypeptide reads, in one-letter code: Xanthine phosphoribosyltransferase (193 aa).

Xanthine contacts are provided by Leu20 and Thr27. 128–132 (ANGQA) provides a ligand contact to 5-phospho-alpha-D-ribose 1-diphosphate. Lys156 contacts xanthine.

The protein belongs to the purine/pyrimidine phosphoribosyltransferase family. Xpt subfamily. In terms of assembly, homodimer.

It is found in the cytoplasm. The catalysed reaction is XMP + diphosphate = xanthine + 5-phospho-alpha-D-ribose 1-diphosphate. It participates in purine metabolism; XMP biosynthesis via salvage pathway; XMP from xanthine: step 1/1. In terms of biological role, converts the preformed base xanthine, a product of nucleic acid breakdown, to xanthosine 5'-monophosphate (XMP), so it can be reused for RNA or DNA synthesis. The sequence is that of Xanthine phosphoribosyltransferase from Streptococcus equi subsp. zooepidemicus (strain H70).